Here is a 424-residue protein sequence, read N- to C-terminus: Serine--tRNA ligase (424 aa).

232 to 234 (TAE) is a binding site for L-serine. 263 to 265 (RRE) is an ATP binding site. Residue Glu-286 coordinates L-serine. Residue 350–353 (EISS) participates in ATP binding. Position 384 (Ser-384) interacts with L-serine.

Belongs to the class-II aminoacyl-tRNA synthetase family. Type-1 seryl-tRNA synthetase subfamily. In terms of assembly, homodimer. The tRNA molecule binds across the dimer.

It is found in the cytoplasm. The catalysed reaction is tRNA(Ser) + L-serine + ATP = L-seryl-tRNA(Ser) + AMP + diphosphate + H(+). It carries out the reaction tRNA(Sec) + L-serine + ATP = L-seryl-tRNA(Sec) + AMP + diphosphate + H(+). It participates in aminoacyl-tRNA biosynthesis; selenocysteinyl-tRNA(Sec) biosynthesis; L-seryl-tRNA(Sec) from L-serine and tRNA(Sec): step 1/1. In terms of biological role, catalyzes the attachment of serine to tRNA(Ser). Is also able to aminoacylate tRNA(Sec) with serine, to form the misacylated tRNA L-seryl-tRNA(Sec), which will be further converted into selenocysteinyl-tRNA(Sec). The sequence is that of Serine--tRNA ligase from Prochlorococcus marinus subsp. pastoris (strain CCMP1986 / NIES-2087 / MED4).